The following is a 689-amino-acid chain: MTDKTFLVEIGTEELPPKALRNLAESFAANFTAELDAANLAHGEVSWFAAPRRLALKVARLSASQPDREVEKRGPAIAQAFDAEGKTTKAAEGWARGCGITVEQAERLTTDKGEWLLYRAHAKGEQAQALLAGMISTALSKLPIPKLMRWSDKETQFVRPVHTVTMLLGDELIPGQVLGIHSARTLRGHRFMGEAEFTIDSADQYPQILLERGKVVADYDARKAKIKADAEEAARKIGGNADLSDSLLEEVTSLVEWPVVLTAKFEEKFLAVPSEALVYTMKGDQKYFPVYDNSGNLLPNFIFVANIESKDPQQIISGNEKVVRPRLADAEFFFNTDRKKRLEDHLPRLETVLFQQQLGTLRDKTDRIQALAGWVAGQIGADVNHATRAGLLSKCDLMTNMVFEFTDTQGVMGMHYARHDGEAEDVAVALNEQYQPRFAGDELPSSAVACALAIADKMDTLAGIFGIGQHPKGDKDPFALRRAALGVLRIIVEKRLPLDLQTLTEEAVRLYGAKLTNANVVDDVIEFMLGRFRAWYQEEGHSVDTIQAVLARRPTRPADFDARVKAVSHFRSLDAAAALAAANKRVSNILAKSTDTLNESVNAAVLKDAAEITLATHLVVLRDKLTPLFAEGRYQEALVELASLREPVDAFFDQVMVMAEDEQVRVNRLTLLSQLRELFLQVADISVLQ.

Belongs to the class-II aminoacyl-tRNA synthetase family. As to quaternary structure, tetramer of two alpha and two beta subunits.

The protein resides in the cytoplasm. It carries out the reaction tRNA(Gly) + glycine + ATP = glycyl-tRNA(Gly) + AMP + diphosphate. The protein is Glycine--tRNA ligase beta subunit of Pectobacterium carotovorum subsp. carotovorum (strain PC1).